The chain runs to 150 residues: Cell division protein SepF (150 aa).

It belongs to the SepF family. In terms of assembly, homodimer. Interacts with FtsZ.

It is found in the cytoplasm. In terms of biological role, cell division protein that is part of the divisome complex and is recruited early to the Z-ring. Probably stimulates Z-ring formation, perhaps through the cross-linking of FtsZ protofilaments. Its function overlaps with FtsA. The polypeptide is Cell division protein SepF (Clostridium botulinum (strain Kyoto / Type A2)).